The sequence spans 146 residues: 3-hydroxyacyl-[acyl-carrier-protein] dehydratase FabZ (146 aa).

The active site involves histidine 49.

Belongs to the thioester dehydratase family. FabZ subfamily.

The protein resides in the cytoplasm. The catalysed reaction is a (3R)-hydroxyacyl-[ACP] = a (2E)-enoyl-[ACP] + H2O. Its function is as follows. Involved in unsaturated fatty acids biosynthesis. Catalyzes the dehydration of short chain beta-hydroxyacyl-ACPs and long chain saturated and unsaturated beta-hydroxyacyl-ACPs. The protein is 3-hydroxyacyl-[acyl-carrier-protein] dehydratase FabZ of Pseudomonas putida (strain ATCC 700007 / DSM 6899 / JCM 31910 / BCRC 17059 / LMG 24140 / F1).